The following is a 469-amino-acid chain: Argininosuccinate lyase (469 aa).

The protein belongs to the lyase 1 family. Argininosuccinate lyase subfamily.

The protein localises to the cytoplasm. The enzyme catalyses 2-(N(omega)-L-arginino)succinate = fumarate + L-arginine. Its pathway is amino-acid biosynthesis; L-arginine biosynthesis; L-arginine from L-ornithine and carbamoyl phosphate: step 3/3. The chain is Argininosuccinate lyase from Mycolicibacterium smegmatis (strain ATCC 700084 / mc(2)155) (Mycobacterium smegmatis).